A 356-amino-acid polypeptide reads, in one-letter code: Protein pelota homolog (356 aa).

The protein belongs to the eukaryotic release factor 1 family. Pelota subfamily. Monomer. It depends on a divalent metal cation as a cofactor.

It is found in the cytoplasm. May function in recognizing stalled ribosomes, interact with stem-loop structures in stalled mRNA molecules, and effect endonucleolytic cleavage of the mRNA. May play a role in the release non-functional ribosomes and degradation of damaged mRNAs. Has endoribonuclease activity. This Pyrococcus horikoshii (strain ATCC 700860 / DSM 12428 / JCM 9974 / NBRC 100139 / OT-3) protein is Protein pelota homolog.